The sequence spans 435 residues: Endoglucanase EG-1 (435 aa).

Residues 1–20 (MARGTALLGLTSLLLGLVNG) form the signal peptide. A Pyrrolidone carboxylic acid modification is found at Gln21. Cystine bridges form between Cys38/Cys44, Cys71/Cys93, and Cys83/Cys89. Asn109 carries an N-linked (GlcNAc...) asparagine glycan. 6 cysteine pairs are disulfide-bonded: Cys160–Cys385, Cys192–Cys215, Cys196–Cys214, Cys235–Cys254, Cys243–Cys248, and Cys259–Cys335. Residue Glu217 is the Nucleophile of the active site. Glu222 serves as the catalytic Proton donor. Asn267 carries an N-linked (GlcNAc...) asparagine glycan.

Belongs to the glycosyl hydrolase 7 (cellulase C) family.

Its subcellular location is the secreted. It catalyses the reaction Endohydrolysis of (1-&gt;4)-beta-D-glucosidic linkages in cellulose, lichenin and cereal beta-D-glucans.. Its function is as follows. The biological conversion of cellulose to glucose generally requires three types of hydrolytic enzymes: (1) Endoglucanases which cut internal beta-1,4-glucosidic bonds; (2) Exocellobiohydrolases that cut the disaccharide cellobiose from the non-reducing end of the cellulose polymer chain; (3) Beta-1,4-glucosidases which hydrolyze the cellobiose and other short cello-oligosaccharides to glucose. The chain is Endoglucanase EG-1 (EG-1) from Humicola insolens (Soft-rot fungus).